The following is a 215-amino-acid chain: Small ribosomal subunit protein uS7 (215 aa).

Belongs to the universal ribosomal protein uS7 family. As to quaternary structure, part of the 30S ribosomal subunit.

Its function is as follows. One of the primary rRNA binding proteins, it binds directly to 16S rRNA where it nucleates assembly of the head domain of the 30S subunit. Is located at the subunit interface close to the decoding center. This chain is Small ribosomal subunit protein uS7, found in Pyrococcus abyssi (strain GE5 / Orsay).